A 224-amino-acid polypeptide reads, in one-letter code: Magnesium-protoporphyrin O-methyltransferase (224 aa).

This sequence belongs to the class I-like SAM-binding methyltransferase superfamily. Magnesium protoporphyrin O-methyltransferase family.

It catalyses the reaction Mg-protoporphyrin IX + S-adenosyl-L-methionine = Mg-protoporphyrin IX 13-monomethyl ester + S-adenosyl-L-homocysteine. It participates in porphyrin-containing compound metabolism; bacteriochlorophyll biosynthesis (light-independent). Functionally, converts Mg-protoporphyrin IX to Mg-protoporphyrin IX methylester using S-adenosyl-L-methionine as a cofactor. The sequence is that of Magnesium-protoporphyrin O-methyltransferase (bchM) from Rhodobacter capsulatus (Rhodopseudomonas capsulata).